The following is a 148-amino-acid chain: Putative nickel-responsive regulator (148 aa).

Residues histidine 88, histidine 99, histidine 101, and cysteine 107 each contribute to the Ni(2+) site.

Belongs to the transcriptional regulatory CopG/NikR family. In terms of assembly, homotetramer. It depends on Ni(2+) as a cofactor.

Transcriptional regulator. The chain is Putative nickel-responsive regulator from Helicobacter pylori (strain ATCC 700392 / 26695) (Campylobacter pylori).